A 95-amino-acid chain; its full sequence is Small ribosomal subunit protein mS37 (95 aa).

The CHCH domain occupies 27 to 69; that stretch reads ANKCLVLMSNLLQCWSSYGHMSPKCAGLVTELKSCTSESALGK. Short sequence motifs (cx9C motif) lie at residues 30–40 and 51–61; these read CLVLMSNLLQC and CAGLVTELKSC. 2 disulfides stabilise this stretch: cysteine 30–cysteine 61 and cysteine 40–cysteine 51.

It belongs to the mitochondrion-specific ribosomal protein mS37 family. Component of the mitochondrial small ribosomal subunit (mt-SSU). Mature yeast 74S mitochondrial ribosomes consist of a small (37S) and a large (54S) subunit. The 37S small subunit contains a 15S ribosomal RNA (15S mt-rRNA) and 34 different proteins. The 54S large subunit contains a 21S rRNA (21S mt-rRNA) and 46 different proteins.

Its subcellular location is the mitochondrion. The protein localises to the mitochondrion matrix. Its function is as follows. Component of the mitochondrial ribosome (mitoribosome), a dedicated translation machinery responsible for the synthesis of mitochondrial genome-encoded proteins, including at least some of the essential transmembrane subunits of the mitochondrial respiratory chain. The mitoribosomes are attached to the mitochondrial inner membrane and translation products are cotranslationally integrated into the membrane. This chain is Small ribosomal subunit protein mS37 (MRP10), found in Saccharomyces cerevisiae (strain ATCC 204508 / S288c) (Baker's yeast).